The following is a 956-amino-acid chain: Glutamyl aminopeptidase (956 aa).

Residues 1–21 (MILEERSSWEGSKRYCIKTKH) are Cytoplasmic-facing. The chain crosses the membrane as a helical; Signal-anchor for type II membrane protein span at residues 22-42 (VAIICAVVVAVGLIVGLSVGL). Residues 43–956 (TRSCDSTEGM…IRNWFLDLNG (914 aa)) lie on the Extracellular side of the membrane. Residues 48–87 (STEGMTQGTTQGTTQAPSHLPPVTSPPEDQGVCPASEDES) form a disordered region. The segment covering 49 to 62 (TEGMTQGTTQGTTQ) has biased composition (low complexity). 2 N-linked (GlcNAc...) asparagine glycosylation sites follow: Asn-126 and Asn-199. Glu-225 is a binding site for substrate. An N-linked (GlcNAc...) asparagine glycan is attached at Asn-326. 359-363 (GAMEN) serves as a coordination point for substrate. His-395 provides a ligand contact to Zn(2+). Residue Glu-396 is the Proton acceptor of the active site. Residues His-399 and Glu-418 each contribute to the Zn(2+) site. Asn-556, Asn-569, Asn-599, Asn-643, Asn-647, Asn-679, Asn-764, Asn-797, Asn-802, and Asn-829 each carry an N-linked (GlcNAc...) asparagine glycan. Arg-888 contributes to the substrate binding site.

This sequence belongs to the peptidase M1 family. As to quaternary structure, homodimer; disulfide-linked. Zn(2+) is required as a cofactor.

Its subcellular location is the cell membrane. The enzyme catalyses Release of N-terminal glutamate (and to a lesser extent aspartate) from a peptide.. Its activity is regulated as follows. Substrate specificity is modulated by calcium which enhances the enzymatic activity for cleavage of acidic residues while reducing its activity with basic residues. Inhibited by aminopeptidase inhibitors amastatin and bestatin. Its function is as follows. Regulates central hypertension through its calcium-modulated preference to cleave N-terminal acidic residues from peptides such as angiotensin II. In Bos taurus (Bovine), this protein is Glutamyl aminopeptidase (ENPEP).